Here is a 440-residue protein sequence, read N- to C-terminus: Glycerol-3-phosphate dehydrogenase [NAD(+)] 2, mitochondrial (440 aa).

The transit peptide at Met1–Thr16 directs the protein to the mitochondrion. Phosphoserine occurs at positions 70, 72, and 75. Residues Gly90–Gly95, Phe122, and Phe178 contribute to the NAD(+) site. Lys201 provides a ligand contact to substrate. Residue Ala234 coordinates NAD(+). Residue Lys294 is the Proton acceptor of the active site. Residues Arg359 and Gln388 each coordinate NAD(+). Arg359 to Asn360 is a binding site for substrate.

The protein belongs to the NAD-dependent glycerol-3-phosphate dehydrogenase family.

It localises to the cytoplasm. Its subcellular location is the mitochondrion. It carries out the reaction sn-glycerol 3-phosphate + NAD(+) = dihydroxyacetone phosphate + NADH + H(+). Catalyzes the production of glycerol under anaerobic growth conditions. Glycerol production serves as a redox sink by consuming the excess cytosolic NADH during anaerobic metabolism. This Saccharomyces cerevisiae (strain ATCC 204508 / S288c) (Baker's yeast) protein is Glycerol-3-phosphate dehydrogenase [NAD(+)] 2, mitochondrial.